A 219-amino-acid chain; its full sequence is MQIRYAGHSCFIIEGSKKLLFDPMPLEDPAAVEADLTLISHAHADHIGDAFARFSLTIAVHELSGYLKSLGVKTIGMNIGGSVEWEGITVRMVPATHSSSIRQKDGTSLYMGQACGFVVEMDGHVIYYAGDTGLFSDMKLIRELYHPDIAILPAGGRYTMGPEECMMAAAWIGAKTVIPMHVNTYPEIEQDMPAFKRAIELTTVMHVEIMQPDDVLELP.

The protein belongs to the UPF0173 family.

The sequence is that of UPF0173 metal-dependent hydrolase Mlab_1154 from Methanocorpusculum labreanum (strain ATCC 43576 / DSM 4855 / Z).